The following is a 1259-amino-acid chain: Zinc finger protein BRUTUS-like At1g74770 (1259 aa).

The helical transmembrane segment at 441–461 (LLYTSIHVLPLGLLKCVILWF) threads the bilayer. Composition is skewed to basic and acidic residues over residues 904–916 (KEEK…ESKK) and 924–934 (EGDKEQTDKMS). The disordered stretch occupies residues 904 to 938 (KEEKDLERSESKKICRGSNQEGDKEQTDKMSQKVS). Residues 1018–1087 (PHSLIFGCNH…ANCSNTSCKS (70 aa)) form a CHY-type zinc finger. Residues Cys1025, His1027, Cys1038, Cys1039, Cys1045, Cys1048, His1049, His1055, Cys1067, Cys1070, Cys1080, Cys1085, Cys1094, Cys1097, His1108, Cys1109, Cys1112, Cys1115, His1127, Cys1128, Cys1131, Cys1134, His1142, and Cys1144 each coordinate Zn(2+). The segment at 1089-1152 (MGKYFCKICK…VCREKCLEDN (64 aa)) adopts a CTCHY-type zinc-finger fold. An RING-type; atypical zinc finger spans residues 1153–1195 (CPICHEYIFTSSSPVKALPCGHLMHSTCFQEYTCSHYTCPVCS).

In terms of assembly, binds zinc and iron ions.

It is found in the membrane. The protein resides in the nucleus. The protein operates within protein modification; protein ubiquitination. Probable E3 ubiquitin-protein ligase that may regulate the response to iron deficiency and thus contributes to iron homeostasis. This Arabidopsis thaliana (Mouse-ear cress) protein is Zinc finger protein BRUTUS-like At1g74770.